Reading from the N-terminus, the 280-residue chain is Large ribosomal subunit protein uL2 (280 aa).

Disordered stretches follow at residues 1–20, 29–58, and 225–280; these read MAIRKYKPTTPGRRASSVSM, PEKSLLRPLSKTGGRNSHGHITTRHRGGGH, and VMNP…NKKR. Positions 45-58 are enriched in basic residues; the sequence is SHGHITTRHRGGGH. The span at 253 to 269 shows a compositional bias: basic and acidic residues; it reads KEGRTRRPKRYSDDMIV. The span at 270–280 shows a compositional bias: basic residues; sequence RRRRANKNKKR.

The protein belongs to the universal ribosomal protein uL2 family. In terms of assembly, part of the 50S ribosomal subunit. Forms a bridge to the 30S subunit in the 70S ribosome.

One of the primary rRNA binding proteins. Required for association of the 30S and 50S subunits to form the 70S ribosome, for tRNA binding and peptide bond formation. It has been suggested to have peptidyltransferase activity; this is somewhat controversial. Makes several contacts with the 16S rRNA in the 70S ribosome. The sequence is that of Large ribosomal subunit protein uL2 from Corynebacterium efficiens (strain DSM 44549 / YS-314 / AJ 12310 / JCM 11189 / NBRC 100395).